A 178-amino-acid chain; its full sequence is Conodipine-P1 (178 aa).

Residues 1 to 24 (MKLLAPVLWAMAALGVTWLVAVDS) form the signal peptide. Residues Pro38, Pro42, and Pro49 each carry the 4-hydroxyproline; partial modification. His54 is an active-site residue. The propeptide at 98–130 (KREVTSHRATSIAHSRLWKTALDQKSFLNRKAR) is interchain peptide. Residue Gln131 is modified to Pyrrolidone carboxylic acid. Position 137 is a 4-hydroxyproline; partial (Pro137).

Belongs to the phospholipase A2 family. Group IX subfamily. As to quaternary structure, heterodimer of an alpha and a beta chain; probably disulfide-linked. Ca(2+) is required as a cofactor. As to expression, expressed by the venom duct.

It localises to the secreted. It catalyses the reaction a 1,2-diacyl-sn-glycero-3-phosphocholine + H2O = a 1-acyl-sn-glycero-3-phosphocholine + a fatty acid + H(+). Functionally, catalyzes the calcium-dependent hydrolysis of the 2-acyl groups in 3-sn-phosphoglycerides. The protein is Conodipine-P1 of Conus purpurascens (Purple cone).